A 316-amino-acid polypeptide reads, in one-letter code: MSKRKVAIIGSGNIGTDLMIKILRHGQHLEMAVMVGIDPQSDGLARARRMGVATTHEGVIGLMNMPEFADIDIVFDATSAGAHVKNDAALREAKPDIRLIDLTPAAIGPYCVPVVNLEANVDQLNVNMVTCGGQATIPMVAAVSRVARVHYAEIIASIASKSAGPGTRANIDEFTETTSRAIEVVGGAAKGKAIIVLNPAEPPLMMRDTVYVLSDEASQDDIEASINEMAEAVQAYVPGYRLKQRVQFEVIPQDKPVNLPGVGQFSGLKTAVWLEVEGAAHYLPAYAGNLDIMTSSALATAEKMAQSLARKAGEAA.

11–14 (SGNI) is an NAD(+) binding site. Cys131 (acyl-thioester intermediate) is an active-site residue. NAD(+)-binding positions include 162 to 170 (SAGPGTRAN) and Asn289.

The protein belongs to the acetaldehyde dehydrogenase family. In terms of assembly, interacts with MhpE.

It catalyses the reaction acetaldehyde + NAD(+) + CoA = acetyl-CoA + NADH + H(+). Its pathway is aromatic compound metabolism; 3-phenylpropanoate degradation. Its function is as follows. Catalyzes the conversion of acetaldehyde to acetyl-CoA, using NAD(+) and coenzyme A. Is the final enzyme in the meta-cleavage pathway for the degradation of aromatic compounds. The sequence is that of Acetaldehyde dehydrogenase from Shigella sonnei (strain Ss046).